A 101-amino-acid polypeptide reads, in one-letter code: Small ribosomal subunit protein uS14 (101 aa).

Residues 52–72 (PRDSSPVRQRRRCRSTGRPRG) are disordered. Positions 59-72 (RQRRRCRSTGRPRG) are enriched in basic residues.

It belongs to the universal ribosomal protein uS14 family. As to quaternary structure, part of the 30S ribosomal subunit. Contacts proteins S3 and S10.

Its function is as follows. Binds 16S rRNA, required for the assembly of 30S particles and may also be responsible for determining the conformation of the 16S rRNA at the A site. This is Small ribosomal subunit protein uS14 from Nitrosococcus oceani (strain ATCC 19707 / BCRC 17464 / JCM 30415 / NCIMB 11848 / C-107).